A 734-amino-acid polypeptide reads, in one-letter code: Photosystem I P700 chlorophyll a apoprotein A2 (734 aa).

8 helical membrane passes run 46 to 69, 135 to 158, 175 to 199, 273 to 291, 330 to 353, 369 to 395, 417 to 439, and 517 to 535; these read IFAS…FHVA, LYTG…LHLQ, LNHH…HVAI, IAHH…GHMY, LHFQ…QHMY, AALY…IFFI, AIIS…LYVH, and FLVH…LILV. [4Fe-4S] cluster contacts are provided by cysteine 559 and cysteine 568. A run of 2 helical transmembrane segments spans residues 575-596 and 643-665; these read AFYL…YWHW and LSVW…MFLI. Chlorophyll a is bound by residues histidine 654, methionine 662, and tyrosine 670. Position 671 (tryptophan 671) interacts with phylloquinone. The helical transmembrane segment at 707 to 727 threads the bilayer; that stretch reads LVGLAHFSVGYIFTYAAFLIA.

It belongs to the PsaA/PsaB family. In terms of assembly, the PsaA/B heterodimer binds the P700 chlorophyll special pair and subsequent electron acceptors. PSI consists of a core antenna complex that captures photons, and an electron transfer chain that converts photonic excitation into a charge separation. The eukaryotic PSI reaction center is composed of at least 11 subunits. The cofactor is P700 is a chlorophyll a/chlorophyll a' dimer, A0 is one or more chlorophyll a, A1 is one or both phylloquinones and FX is a shared 4Fe-4S iron-sulfur center..

The protein localises to the plastid. The protein resides in the chloroplast thylakoid membrane. The enzyme catalyses reduced [plastocyanin] + hnu + oxidized [2Fe-2S]-[ferredoxin] = oxidized [plastocyanin] + reduced [2Fe-2S]-[ferredoxin]. Functionally, psaA and PsaB bind P700, the primary electron donor of photosystem I (PSI), as well as the electron acceptors A0, A1 and FX. PSI is a plastocyanin-ferredoxin oxidoreductase, converting photonic excitation into a charge separation, which transfers an electron from the donor P700 chlorophyll pair to the spectroscopically characterized acceptors A0, A1, FX, FA and FB in turn. Oxidized P700 is reduced on the lumenal side of the thylakoid membrane by plastocyanin. The chain is Photosystem I P700 chlorophyll a apoprotein A2 from Citrus sinensis (Sweet orange).